The following is a 145-amino-acid chain: Deoxyuridine 5'-triphosphate nucleotidohydrolase (145 aa).

Substrate-binding positions include 63–65 (RSG), Gln76, and 80–82 (TVD).

This sequence belongs to the dUTPase family. Mg(2+) is required as a cofactor.

The enzyme catalyses dUTP + H2O = dUMP + diphosphate + H(+). The protein operates within pyrimidine metabolism; dUMP biosynthesis; dUMP from dCTP (dUTP route): step 2/2. Its function is as follows. This enzyme is involved in nucleotide metabolism: it produces dUMP, the immediate precursor of thymidine nucleotides and it decreases the intracellular concentration of dUTP so that uracil cannot be incorporated into DNA. This chain is Deoxyuridine 5'-triphosphate nucleotidohydrolase, found in Chlamydia muridarum (strain MoPn / Nigg).